The chain runs to 370 residues: DNA polymerase IV (370 aa).

Residues 14–198 enclose the UmuC domain; the sequence is IIHIDMDAFF…LPIEKFYGVG (185 aa). Mg(2+)-binding residues include D18 and D116. E117 is a catalytic residue.

Belongs to the DNA polymerase type-Y family. As to quaternary structure, monomer. Mg(2+) serves as cofactor.

Its subcellular location is the cytoplasm. The enzyme catalyses DNA(n) + a 2'-deoxyribonucleoside 5'-triphosphate = DNA(n+1) + diphosphate. Functionally, poorly processive, error-prone DNA polymerase involved in untargeted mutagenesis. Copies undamaged DNA at stalled replication forks, which arise in vivo from mismatched or misaligned primer ends. These misaligned primers can be extended by PolIV. Exhibits no 3'-5' exonuclease (proofreading) activity. May be involved in translesional synthesis, in conjunction with the beta clamp from PolIII. This Streptococcus mutans serotype c (strain ATCC 700610 / UA159) protein is DNA polymerase IV.